A 101-amino-acid polypeptide reads, in one-letter code: Pro-corazonin (101 aa).

Residues 1-19 (MVTNITLILTLMTLASVTA) form the signal peptide. Gln-20 is subject to Pyrrolidone carboxylic acid. Asparagine amide is present on Asn-30.

It belongs to the corazonin family.

It localises to the secreted. Its function is as follows. Cardioactive peptide. Corazonin is probably involved in the physiological regulation of the heart beat. The protein is Pro-corazonin (crz) of Bombyx mori (Silk moth).